A 288-amino-acid chain; its full sequence is Protease HtpX homolog (288 aa).

A run of 2 helical transmembrane segments spans residues 7–27 (TAVLMAAITALFIVVGGMLGG) and 29–49 (QGMLMALLMAVGMNFFSYWFS). Histidine 131 contributes to the Zn(2+) binding site. The active site involves glutamate 132. Histidine 135 is a binding site for Zn(2+). A run of 2 helical transmembrane segments spans residues 141–161 (ILISAVAATMAGAISALANFA) and 177–197 (IASLMVAILAPIAASLIQMSI). Zn(2+) is bound at residue glutamate 202.

It belongs to the peptidase M48B family. The cofactor is Zn(2+).

The protein resides in the cell inner membrane. The protein is Protease HtpX homolog of Polynucleobacter necessarius subsp. necessarius (strain STIR1).